The sequence spans 962 residues: Protease 3 (962 aa).

The signal sequence occupies residues 1–23; sequence MPRSIWFKALLLFVALWAPLSQA. Zn(2+) is bound at residue His88. The active-site Proton acceptor is Glu91. Zn(2+) contacts are provided by His92 and Glu169.

It belongs to the peptidase M16 family. Monomer. Zn(2+) serves as cofactor.

The protein localises to the periplasm. It carries out the reaction Preferential cleavage of 16-Tyr-|-Leu-17 and 25-Phe-|-Tyr-26 bonds of oxidized insulin B chain. Also acts on other substrates of Mw less than 7 kDa such as insulin and glucagon.. Endopeptidase that degrades small peptides of less than 7 kDa, such as glucagon and insulin. This Escherichia coli O6:H1 (strain CFT073 / ATCC 700928 / UPEC) protein is Protease 3 (ptrA).